An 80-amino-acid chain; its full sequence is Acyl carrier protein (80 aa).

Positions Lys2–Asn77 constitute a Carrier domain. Position 37 is an O-(pantetheine 4'-phosphoryl)serine (Ser37).

This sequence belongs to the acyl carrier protein (ACP) family. In terms of processing, 4'-phosphopantetheine is transferred from CoA to a specific serine of apo-ACP by AcpS. This modification is essential for activity because fatty acids are bound in thioester linkage to the sulfhydryl of the prosthetic group.

It localises to the cytoplasm. It functions in the pathway lipid metabolism; fatty acid biosynthesis. Functionally, carrier of the growing fatty acid chain in fatty acid biosynthesis. The sequence is that of Acyl carrier protein from Buchnera aphidicola subsp. Acyrthosiphon pisum (strain 5A).